Here is a 70-residue protein sequence, read N- to C-terminus: ATP synthase subunit c (70 aa).

2 helical membrane-spanning segments follow: residues 5–25 and 47–67; these read AAGIAAGLAAVGGAIAVAIIV and FIGVPLAEAVPIIAIVVSFIL.

This sequence belongs to the ATPase C chain family. In terms of assembly, F-type ATPases have 2 components, F(1) - the catalytic core - and F(0) - the membrane proton channel. F(1) has five subunits: alpha(3), beta(3), gamma(1), delta(1), epsilon(1). F(0) has three main subunits: a(1), b(2) and c(10-14). The alpha and beta chains form an alternating ring which encloses part of the gamma chain. F(1) is attached to F(0) by a central stalk formed by the gamma and epsilon chains, while a peripheral stalk is formed by the delta and b chains.

Its subcellular location is the cell membrane. Functionally, f(1)F(0) ATP synthase produces ATP from ADP in the presence of a proton or sodium gradient. F-type ATPases consist of two structural domains, F(1) containing the extramembraneous catalytic core and F(0) containing the membrane proton channel, linked together by a central stalk and a peripheral stalk. During catalysis, ATP synthesis in the catalytic domain of F(1) is coupled via a rotary mechanism of the central stalk subunits to proton translocation. Key component of the F(0) channel; it plays a direct role in translocation across the membrane. A homomeric c-ring of between 10-14 subunits forms the central stalk rotor element with the F(1) delta and epsilon subunits. The polypeptide is ATP synthase subunit c (Halalkalibacterium halodurans (strain ATCC BAA-125 / DSM 18197 / FERM 7344 / JCM 9153 / C-125) (Bacillus halodurans)).